Here is a 361-residue protein sequence, read N- to C-terminus: Chorismate synthase (361 aa).

Arg48 provides a ligand contact to NADP(+). Residues 126–128 (RSS), Gly269, 302–306 (KPVPS), and Asn328 each bind FMN.

This sequence belongs to the chorismate synthase family. As to quaternary structure, homotetramer. FMNH2 serves as cofactor.

The catalysed reaction is 5-O-(1-carboxyvinyl)-3-phosphoshikimate = chorismate + phosphate. It functions in the pathway metabolic intermediate biosynthesis; chorismate biosynthesis; chorismate from D-erythrose 4-phosphate and phosphoenolpyruvate: step 7/7. Catalyzes the anti-1,4-elimination of the C-3 phosphate and the C-6 proR hydrogen from 5-enolpyruvylshikimate-3-phosphate (EPSP) to yield chorismate, which is the branch point compound that serves as the starting substrate for the three terminal pathways of aromatic amino acid biosynthesis. This reaction introduces a second double bond into the aromatic ring system. This chain is Chorismate synthase, found in Treponema denticola (strain ATCC 35405 / DSM 14222 / CIP 103919 / JCM 8153 / KCTC 15104).